Here is a 174-residue protein sequence, read N- to C-terminus: Protein GrpE (174 aa).

The segment at 1 to 35 (MAQDIKNEEVEEVQEEEVVETAEETTPEKSELDLA) is disordered. The segment covering 9–25 (EVEEVQEEEVVETAEET) has biased composition (acidic residues). Over residues 26–35 (TPEKSELDLA) the composition is skewed to basic and acidic residues.

Belongs to the GrpE family. Homodimer.

The protein localises to the cytoplasm. Participates actively in the response to hyperosmotic and heat shock by preventing the aggregation of stress-denatured proteins, in association with DnaK and GrpE. It is the nucleotide exchange factor for DnaK and may function as a thermosensor. Unfolded proteins bind initially to DnaJ; upon interaction with the DnaJ-bound protein, DnaK hydrolyzes its bound ATP, resulting in the formation of a stable complex. GrpE releases ADP from DnaK; ATP binding to DnaK triggers the release of the substrate protein, thus completing the reaction cycle. Several rounds of ATP-dependent interactions between DnaJ, DnaK and GrpE are required for fully efficient folding. This is Protein GrpE from Streptococcus pneumoniae (strain ATCC 700669 / Spain 23F-1).